The primary structure comprises 340 residues: Ketol-acid reductoisomerase (NADP(+)) (340 aa).

The region spanning 2-182 (AELYYDNQAD…GCTRAGVLRT (181 aa)) is the KARI N-terminal Rossmann domain. NADP(+) is bound by residues 25–28 (FGSQ), Ser-51, Ser-53, and 83–86 (DIGQ). His-108 is a catalytic residue. An NADP(+)-binding site is contributed by Gly-134. One can recognise a KARI C-terminal knotted domain in the interval 183–328 (TFAEETETDL…RELRRMMPFV (146 aa)). Mg(2+) is bound by residues Asp-191, Glu-195, Glu-227, and Glu-231. Residue Ser-252 coordinates substrate.

Belongs to the ketol-acid reductoisomerase family. It depends on Mg(2+) as a cofactor.

The enzyme catalyses (2R)-2,3-dihydroxy-3-methylbutanoate + NADP(+) = (2S)-2-acetolactate + NADPH + H(+). It carries out the reaction (2R,3R)-2,3-dihydroxy-3-methylpentanoate + NADP(+) = (S)-2-ethyl-2-hydroxy-3-oxobutanoate + NADPH + H(+). It functions in the pathway amino-acid biosynthesis; L-isoleucine biosynthesis; L-isoleucine from 2-oxobutanoate: step 2/4. It participates in amino-acid biosynthesis; L-valine biosynthesis; L-valine from pyruvate: step 2/4. In terms of biological role, involved in the biosynthesis of branched-chain amino acids (BCAA). Catalyzes an alkyl-migration followed by a ketol-acid reduction of (S)-2-acetolactate (S2AL) to yield (R)-2,3-dihydroxy-isovalerate. In the isomerase reaction, S2AL is rearranged via a Mg-dependent methyl migration to produce 3-hydroxy-3-methyl-2-ketobutyrate (HMKB). In the reductase reaction, this 2-ketoacid undergoes a metal-dependent reduction by NADPH to yield (R)-2,3-dihydroxy-isovalerate. This is Ketol-acid reductoisomerase (NADP(+)) from Chloroflexus aurantiacus (strain ATCC 29366 / DSM 635 / J-10-fl).